The chain runs to 117 residues: MQKSCDENEGTPQNTPKADEGHPSEDPPQQAGENLQASGENVREETDGSLRGEPAEPSPEPKEDTPARHLNPEEVIRGVDELERLREEIRRVRNKFVLMHWKQRHSRSRPYPVCFRP.

Residues 1–81 are disordered; that stretch reads MQKSCDENEG…PEEVIRGVDE (81 aa). The segment covering 41-81 has biased composition (basic and acidic residues); that stretch reads NVREETDGSLRGEPAEPSPEPKEDTPARHLNPEEVIRGVDE. The stretch at 73–100 forms a coiled coil; sequence EEVIRGVDELERLREEIRRVRNKFVLMH.

This sequence belongs to the TFS-II family. TFA subfamily. Highly expressed in kidney. Moderately expressed in heart and lung. Low expression in brain and liver. Expression is up-regulated in nephrectomized kidney.

Its subcellular location is the nucleus. Functionally, may be involved in transcriptional regulation. The sequence is that of Transcription elongation factor A protein-like 8 (Tceal8) from Rattus norvegicus (Rat).